Consider the following 160-residue polypeptide: Endoribonuclease YbeY (160 aa).

Zn(2+) is bound by residues His123, His127, and His133.

The protein belongs to the endoribonuclease YbeY family. Zn(2+) serves as cofactor.

It is found in the cytoplasm. Functionally, single strand-specific metallo-endoribonuclease involved in late-stage 70S ribosome quality control and in maturation of the 3' terminus of the 16S rRNA. In Shouchella clausii (strain KSM-K16) (Alkalihalobacillus clausii), this protein is Endoribonuclease YbeY.